Consider the following 332-residue polypeptide: Fructose-1,6-bisphosphatase class 1 (332 aa).

Positions 89, 110, 112, and 113 each coordinate Mg(2+). Residues 113 to 116 (DGSS), N206, Y239, 257 to 259 (YLY), and K269 each bind substrate. Residue E275 participates in Mg(2+) binding.

Belongs to the FBPase class 1 family. Homotetramer. The cofactor is Mg(2+).

The protein resides in the cytoplasm. The catalysed reaction is beta-D-fructose 1,6-bisphosphate + H2O = beta-D-fructose 6-phosphate + phosphate. It functions in the pathway carbohydrate biosynthesis; gluconeogenesis. This chain is Fructose-1,6-bisphosphatase class 1, found in Shigella sonnei (strain Ss046).